Here is a 675-residue protein sequence, read N- to C-terminus: Calcium channel YVC1 (675 aa).

The Cytoplasmic portion of the chain corresponds to 1–236 (MVSANGDLHL…PVRLKAPVYQ (236 aa)). A helical membrane pass occupies residues 237-257 (NYLQMIFSFLFLGLYTLVVNG). At 258-295 (KDSERVQSFDLLESIFYVFNTGFILDELTKLYYIGYAH) the chain is on the vacuolar side. Residues 296-316 (LSFWNLFNDTTYLIITFAMGF) traverse the membrane as a helical segment. Topologically, residues 317–335 (RAMSVTPLNAKYSSEDWDK) are cytoplasmic. The chain crosses the membrane as a helical span at residues 336 to 355 (ISYRVLSCAAPFVWSRLLLY). Topologically, residues 356–376 (LESQRFIGIMLVILKHMMKES) are vacuolar. A helical transmembrane segment spans residues 377–397 (IVFFFLLFLIMIGFTQGFLGL). The Cytoplasmic segment spans residues 398 to 405 (DSADGKRD). The helical transmembrane segment at 406–426 (ITGPILGNLTITVLGLGSFDV) threads the bilayer. Topologically, residues 427-436 (FEEFAPPYAA) are vacuolar. The chain crosses the membrane as a helical span at residues 437 to 457 (ILYYGYYFIVSVILLNILIAL). Residues 458 to 675 (YSTAYQKVID…EKLDIKDKKE (218 aa)) lie on the Cytoplasmic side of the membrane. The residue at position 636 (threonine 636) is a Phosphothreonine.

Belongs to the transient receptor (TC 1.A.4) family.

Its subcellular location is the vacuole membrane. Functionally, required for release of calcium ions from the vacuole in response to hyperosmotic shock. The chain is Calcium channel YVC1 from Saccharomyces cerevisiae (strain ATCC 204508 / S288c) (Baker's yeast).